The following is a 641-amino-acid chain: Bilirubin reductase (641 aa).

Residue glutamine 96 participates in FMN binding. Arginine 167 functions as the Proton donor in the catalytic mechanism. Residues lysine 214, arginine 295, and 317-318 contribute to the FMN site; that span reads GR. [4Fe-4S] cluster is bound by residues cysteine 341, cysteine 344, cysteine 348, and cysteine 360. FAD-binding residues include alanine 391, glutamate 410, glutamine 418, lysine 428, and alanine 455.

In the N-terminal section; belongs to the NADH:flavin oxidoreductase/NADH oxidase family. FAD is required as a cofactor. Requires FMN as cofactor. It depends on [4Fe-4S] cluster as a cofactor.

The enzyme catalyses urobilinogen + 4 A = (4Z,15Z)-bilirubin IXalpha + 4 AH2. The catalysed reaction is urobilinogen + 2 A = (4Z,15Z)-mesobilirubin IXalpha + 2 AH2. It functions in the pathway porphyrin-containing compound metabolism; protoheme degradation. Functionally, bilirubin reductase that catalyzes reduction of mesobilirubin and/or bilirubin to urobilinogen, a key step during heme degradation. Urobilinogen then spontaneously degrades into urobilin, which gives urine its distinctive yellow color. The chain is Bilirubin reductase from Mediterraneibacter gnavus (strain CC55_001C).